The sequence spans 194 residues: Heme transporter hrg-1 (194 aa).

The next 4 membrane-spanning stretches (helical) occupy residues 45-65 (QIWI…VFAI), 71-91 (IAVT…HLHL), 113-133 (GATV…VAGI), and 143-163 (LMGA…KWSA). The Di-leucine motif motif lies at 182–183 (LL).

The protein belongs to the HRG family. In terms of tissue distribution, specifically expressed in the intestinal cells in larvae and adults.

The protein localises to the endosome membrane. It is found in the lysosome membrane. Heme transporter that regulates intracellular heme availability through the endosomal or lysosomal compartment. This is Heme transporter hrg-1 (hrg-1) from Caenorhabditis elegans.